Here is a 153-residue protein sequence, read N- to C-terminus: Mitochondrial fission 1 protein (153 aa).

The Cytoplasmic portion of the chain corresponds to 1 to 124 (MTQLPYAVDA…LIDDKVTKEG (124 aa)). Residues 73–106 (RECLYYLALGNYKLGNYAQARKYNDALLENEPAN) form a TPR repeat. The chain crosses the membrane as a helical span at residues 125 to 145 (LMGVAIISGVAVAAGVIGGVL). At 146-153 (LRNLGRKR) the chain is on the mitochondrial intermembrane side.

The protein belongs to the FIS1 family.

Its subcellular location is the mitochondrion outer membrane. In terms of biological role, has a role in mitochondrial fission. Has a role in outer membrane fission but not matrix separation. This Neurospora crassa (strain ATCC 24698 / 74-OR23-1A / CBS 708.71 / DSM 1257 / FGSC 987) protein is Mitochondrial fission 1 protein (mtp-2).